The primary structure comprises 307 residues: Probable E3 SUMO-protein ligase RNF212 (307 aa).

The segment at 7–46 (CNRCFQSPHRKSSFSLTSCGHVYCHSCLLKGTKNECVICQ) adopts an RING-type zinc-finger fold. Residues 91-124 (RRRLVAFYQEKISQLEESLRKSVLQIKQLQSMRS) are a coiled coil. The segment at 164-291 (LTPPARKPEM…KMSPFLPSTP (128 aa)) is disordered. 3 stretches are compositionally biased toward polar residues: residues 202-213 (LSLTPSHASMTK), 233-252 (SQLS…SSWT), and 259-271 (ISIS…QCAG).

Specifically expressed in meiocytes of the gonads.

Its subcellular location is the nucleus. The protein localises to the chromosome. Its pathway is protein modification; protein sumoylation. Its function is as follows. SUMO E3 ligase that acts as a regulator of crossing-over during meiosis: required to couple chromosome synapsis to the formation of crossover-specific recombination complexes. Localizes to recombination sites and stabilizes meiosis-specific recombination factors, such as MutS-gamma complex proteins (MSH4 and MSH5) and TEX11. May mediate sumoylation of target proteins MSH4 and/or MSH5, leading to enhance their binding to recombination sites. Acts as a limiting factor for crossover designation and/or reinforcement and plays an antagonist role with CCNB1IP1/HEI10 in the regulation of meiotic recombination. This is Probable E3 SUMO-protein ligase RNF212 (Rnf212) from Mus musculus (Mouse).